A 298-amino-acid polypeptide reads, in one-letter code: Nucleotide-binding protein GK3066 (298 aa).

17-24 (GMSGAGKT) serves as a coordination point for ATP. Residue 68 to 71 (DLRS) coordinates GTP.

It belongs to the RapZ-like family.

Displays ATPase and GTPase activities. The protein is Nucleotide-binding protein GK3066 of Geobacillus kaustophilus (strain HTA426).